Consider the following 290-residue polypeptide: MDIEAYFERIGYKNSVNKLDLATLTEVLQHQMRAVPFENLNMHCGEAMHLDLQDIFDHIVRKKRGGWCLQVNHLLYWALTKMGFETTMLGGYVYITPVSKYSSEMVHLLVQVTISDRKYIVDSAYGGSYQMWEPLELTSGKDQPQVPAIFLLTEENGTWYLDQIRREQYVPNEEFVNSDLLEKNKYRKIYSFTLEPRVIEDFEYVNSYLQTSPASVFVSTSFCSLQTSEGVHCLVGSTFTSRRFSYKDDVDLVEFKYVNEEEIEDVLKTAFGISLERKFVPKHGELVFTI.

Met-1 bears the N-acetylmethionine mark. Cys-68 serves as the catalytic Acyl-thioester intermediate. CoA is bound at residue Ser-103. 106–107 (VH) lines the substrate pocket. Catalysis depends on residues His-107 and Asp-122. Tyr-208 serves as a coordination point for CoA.

The protein belongs to the arylamine N-acetyltransferase family.

The protein resides in the cytoplasm. It catalyses the reaction an arylamine + acetyl-CoA = an N-acetylarylamine + CoA. In terms of biological role, participates in the detoxification of a plethora of hydrazine and arylamine drugs. Isoniazid, 2-aminofluorene and anisidine are preferred substrates for NAT-1. No activity with p-aminobenzoic acid (PABA) nor SMZ. This Mus musculus (Mouse) protein is Arylamine N-acetyltransferase 1 (Nat1).